A 247-amino-acid chain; its full sequence is Geranylgeranylglyceryl phosphate synthase (247 aa).

2 residues coordinate Mg(2+): Asp-23 and Ser-52. Residues 171 to 177 (YLEAGSG), 203 to 204 (GG), and 225 to 226 (GT) contribute to the sn-glycerol 1-phosphate site.

This sequence belongs to the GGGP/HepGP synthase family. Group II subfamily. The cofactor is Mg(2+).

It is found in the cytoplasm. It carries out the reaction sn-glycerol 1-phosphate + (2E,6E,10E)-geranylgeranyl diphosphate = sn-3-O-(geranylgeranyl)glycerol 1-phosphate + diphosphate. It functions in the pathway membrane lipid metabolism; glycerophospholipid metabolism. In terms of biological role, prenyltransferase that catalyzes the transfer of the geranylgeranyl moiety of geranylgeranyl diphosphate (GGPP) to the C3 hydroxyl of sn-glycerol-1-phosphate (G1P). This reaction is the first ether-bond-formation step in the biosynthesis of archaeal membrane lipids. The sequence is that of Geranylgeranylglyceryl phosphate synthase from Methanosarcina mazei (strain ATCC BAA-159 / DSM 3647 / Goe1 / Go1 / JCM 11833 / OCM 88) (Methanosarcina frisia).